A 461-amino-acid polypeptide reads, in one-letter code: Cysteine--tRNA ligase (461 aa).

Residue C28 coordinates Zn(2+). The 'HIGH' region signature appears at V30–H40. Residues C209, H234, and E238 each contribute to the Zn(2+) site. The 'KMSKS' region motif lies at K266–S270. An ATP-binding site is contributed by K269.

This sequence belongs to the class-I aminoacyl-tRNA synthetase family. Monomer. The cofactor is Zn(2+).

Its subcellular location is the cytoplasm. The enzyme catalyses tRNA(Cys) + L-cysteine + ATP = L-cysteinyl-tRNA(Cys) + AMP + diphosphate. This chain is Cysteine--tRNA ligase, found in Vibrio atlanticus (strain LGP32) (Vibrio splendidus (strain Mel32)).